Consider the following 396-residue polypeptide: Tryptophan synthase beta chain (396 aa).

Lysine 86 carries the post-translational modification N6-(pyridoxal phosphate)lysine.

It belongs to the TrpB family. In terms of assembly, tetramer of two alpha and two beta chains. Pyridoxal 5'-phosphate is required as a cofactor.

The enzyme catalyses (1S,2R)-1-C-(indol-3-yl)glycerol 3-phosphate + L-serine = D-glyceraldehyde 3-phosphate + L-tryptophan + H2O. The protein operates within amino-acid biosynthesis; L-tryptophan biosynthesis; L-tryptophan from chorismate: step 5/5. In terms of biological role, the beta subunit is responsible for the synthesis of L-tryptophan from indole and L-serine. The polypeptide is Tryptophan synthase beta chain (Proteus mirabilis (strain HI4320)).